A 98-amino-acid chain; its full sequence is NADH-ubiquinone oxidoreductase chain 4L (98 aa).

The next 3 helical transmembrane spans lie at Thr-2–Phe-22, Thr-29–Leu-49, and Ile-61–Ile-81.

It belongs to the complex I subunit 4L family. As to quaternary structure, core subunit of respiratory chain NADH dehydrogenase (Complex I) which is composed of 45 different subunits.

The protein resides in the mitochondrion inner membrane. The enzyme catalyses a ubiquinone + NADH + 5 H(+)(in) = a ubiquinol + NAD(+) + 4 H(+)(out). Functionally, core subunit of the mitochondrial membrane respiratory chain NADH dehydrogenase (Complex I) which catalyzes electron transfer from NADH through the respiratory chain, using ubiquinone as an electron acceptor. Part of the enzyme membrane arm which is embedded in the lipid bilayer and involved in proton translocation. The polypeptide is NADH-ubiquinone oxidoreductase chain 4L (MT-ND4L) (Calomys musculinus (Drylands vesper mouse)).